The primary structure comprises 92 residues: YcgL domain-containing protein VC0395_A1544/VC395_2072 (92 aa).

One can recognise a YcgL domain in the interval 1 to 84 (MLCSIYKSPK…PPENLLEQHK (84 aa)). Residues 71–92 (QLPPPPENLLEQHKERKARQTP) are disordered.

This Vibrio cholerae serotype O1 (strain ATCC 39541 / Classical Ogawa 395 / O395) protein is YcgL domain-containing protein VC0395_A1544/VC395_2072.